Here is a 348-residue protein sequence, read N- to C-terminus: Mannonate dehydratase (348 aa).

The protein belongs to the mannonate dehydratase family. Fe(2+) serves as cofactor. The cofactor is Mn(2+).

The catalysed reaction is D-mannonate = 2-dehydro-3-deoxy-D-gluconate + H2O. The protein operates within carbohydrate metabolism; pentose and glucuronate interconversion. In terms of biological role, catalyzes the dehydration of D-mannonate. The sequence is that of Mannonate dehydratase from Streptococcus agalactiae serotype Ia (strain ATCC 27591 / A909 / CDC SS700).